Consider the following 179-residue polypeptide: Large ribosomal subunit protein uL5 (179 aa).

Belongs to the universal ribosomal protein uL5 family. Part of the 50S ribosomal subunit; part of the 5S rRNA/L5/L18/L25 subcomplex. Contacts the 5S rRNA and the P site tRNA. Forms a bridge to the 30S subunit in the 70S ribosome.

In terms of biological role, this is one of the proteins that bind and probably mediate the attachment of the 5S RNA into the large ribosomal subunit, where it forms part of the central protuberance. In the 70S ribosome it contacts protein S13 of the 30S subunit (bridge B1b), connecting the 2 subunits; this bridge is implicated in subunit movement. Contacts the P site tRNA; the 5S rRNA and some of its associated proteins might help stabilize positioning of ribosome-bound tRNAs. This is Large ribosomal subunit protein uL5 from Chromobacterium violaceum (strain ATCC 12472 / DSM 30191 / JCM 1249 / CCUG 213 / NBRC 12614 / NCIMB 9131 / NCTC 9757 / MK).